The following is a 191-amino-acid chain: UPF0312 protein Sputcn32_2702 (191 aa).

A signal peptide spans 1–22; that stretch reads MKKQLLSALIGVSLLAPMAASA.

The protein belongs to the UPF0312 family. Type 1 subfamily.

It localises to the periplasm. The protein is UPF0312 protein Sputcn32_2702 of Shewanella putrefaciens (strain CN-32 / ATCC BAA-453).